The sequence spans 1306 residues: Contactin-associated protein-like 5 (1306 aa).

A signal peptide spans 1–24; that stretch reads MDSLPRLTSVLTLLFSGLWHLGLT. Over 25–1237 the chain is Extracellular; it reads ATNYNCDDPL…PLTNAVRSDS (1213 aa). The region spanning 30-174 is the F5/8 type C domain; it reads CDDPLASLLS…IGMRVEVYGC (145 aa). A disulfide bond links C30 and C174. Laminin G-like domains follow at residues 180–360 and 367–544; these read VADF…TFSC and PITF…IDLC. Residues N282, N355, and N496 are each glycosylated (N-linked (GlcNAc...) asparagine). A disulfide bridge connects residues C329 and C360. 3 disulfide bridges follow: C512–C544, C550–C561, and C555–C570. The region spanning 546-583 is the EGF-like 1 domain; the sequence is IKDRCLPNYCEHGGSCSQSWTTFYCNCSDTSYTGATCH. N571 carries N-linked (GlcNAc...) asparagine glycosylation. Cysteines 572 and 582 form a disulfide. The Fibrinogen C-terminal domain occupies 584–790; that stretch reads NSIYEQSCEV…LRCYGDRRFW (207 aa). N622 carries an N-linked (GlcNAc...) asparagine glycan. The 166-residue stretch at 791 to 956 folds into the Laminin G-like 3 domain; it reads NAVSFYTEAS…KVTSGVRPGC (166 aa). Cystine bridges form between C929–C956, C960–C973, C967–C982, C984–C994, and C1164–C1199. Positions 957–995 constitute an EGF-like 2 domain; sequence PGHCSSYGSICHNGGKCVEKHNGYLCDCTNSPYEGPFCK. In terms of domain architecture, Laminin G-like 4 spans 1013–1199; the sequence is QEPYPVTKNI…VHGTLTESSC (187 aa). The chain crosses the membrane as a helical span at residues 1238 to 1258; it reads AVIGGVIAVVIFIIFCIIGIM. At 1259–1306 the chain is on the cytoplasmic side; the sequence is TRFLYQHKQSHRTSQMKEKEYPENLDSSFRNEIDLQNTVSECKREYFI.

Belongs to the neurexin family.

It localises to the membrane. May play a role in the correct development and proper functioning of the peripheral and central nervous system and be involved in cell adhesion and intercellular communication. The protein is Contactin-associated protein-like 5 (CNTNAP5) of Homo sapiens (Human).